A 333-amino-acid polypeptide reads, in one-letter code: UPF0285 protein MTH_1441 (333 aa).

Belongs to the UPF0285 family.

The sequence is that of UPF0285 protein MTH_1441 from Methanothermobacter thermautotrophicus (strain ATCC 29096 / DSM 1053 / JCM 10044 / NBRC 100330 / Delta H) (Methanobacterium thermoautotrophicum).